The following is a 28-amino-acid chain: Potassium channel toxin alpha-KTx 9.3 (28 aa).

Cystine bridges form between C3–C19, C6–C24, and C10–C26.

This sequence belongs to the short scorpion toxin superfamily. Potassium channel inhibitor family. Alpha-KTx 09 subfamily. Expressed by the venom gland.

The protein resides in the secreted. Its function is as follows. Inhibits voltage-gated potassium channels. The chain is Potassium channel toxin alpha-KTx 9.3 from Aegaeobuthus nigrocinctus (Scorpion).